The following is a 931-amino-acid chain: Valine--tRNA ligase (931 aa).

Residues 43–53 (PNVTGALHIGH) carry the 'HIGH' region motif. The interval 351–370 (IPHTDKDGNAHDAEPRTIQT) is disordered. Over residues 353–365 (HTDKDGNAHDAEP) the composition is skewed to basic and acidic residues. The short motif at 552–556 (KMSKS) is the 'KMSKS' region element. ATP is bound at residue K555. The tract at residues 691–717 (LQGRGLGEGDEAVPAPADGPLSPALSP) is disordered. A coiled-coil region spans residues 864–930 (VIDIAAERER…DRLSAALARL (67 aa)).

The protein belongs to the class-I aminoacyl-tRNA synthetase family. ValS type 1 subfamily. As to quaternary structure, monomer.

It localises to the cytoplasm. It carries out the reaction tRNA(Val) + L-valine + ATP = L-valyl-tRNA(Val) + AMP + diphosphate. Its function is as follows. Catalyzes the attachment of valine to tRNA(Val). As ValRS can inadvertently accommodate and process structurally similar amino acids such as threonine, to avoid such errors, it has a 'posttransfer' editing activity that hydrolyzes mischarged Thr-tRNA(Val) in a tRNA-dependent manner. The polypeptide is Valine--tRNA ligase (Sphingopyxis alaskensis (strain DSM 13593 / LMG 18877 / RB2256) (Sphingomonas alaskensis)).